Here is a 459-residue protein sequence, read N- to C-terminus: Light-independent protochlorophyllide reductase subunit N (459 aa).

3 residues coordinate [4Fe-4S] cluster: Cys22, Cys47, and Cys107.

It belongs to the BchN/ChlN family. Protochlorophyllide reductase is composed of three subunits; ChlL, ChlN and ChlB. Forms a heterotetramer of two ChlB and two ChlN subunits. [4Fe-4S] cluster serves as cofactor.

It is found in the plastid. It localises to the chloroplast. The enzyme catalyses chlorophyllide a + oxidized 2[4Fe-4S]-[ferredoxin] + 2 ADP + 2 phosphate = protochlorophyllide a + reduced 2[4Fe-4S]-[ferredoxin] + 2 ATP + 2 H2O. It functions in the pathway porphyrin-containing compound metabolism; chlorophyll biosynthesis (light-independent). Functionally, component of the dark-operative protochlorophyllide reductase (DPOR) that uses Mg-ATP and reduced ferredoxin to reduce ring D of protochlorophyllide (Pchlide) to form chlorophyllide a (Chlide). This reaction is light-independent. The NB-protein (ChlN-ChlB) is the catalytic component of the complex. This is Light-independent protochlorophyllide reductase subunit N from Pinus contorta (Shore pine).